Reading from the N-terminus, the 760-residue chain is Armadillo-like helical domain-containing protein 4 (760 aa).

The N-terminal stretch at Met-1–Ala-27 is a signal peptide. The Extracellular portion of the chain corresponds to Phe-28–Met-700. Disordered stretches follow at residues Leu-49–Pro-69, Gly-117–Pro-143, Arg-216–Ser-243, His-373–Asp-392, Thr-474–Arg-495, and Asn-536–Pro-652. A glycan (N-linked (GlcNAc...) asparagine) is linked at Asn-56. Residues Arg-216–Thr-228 are compositionally biased toward basic and acidic residues. Over residues Asp-380 to Met-390 the composition is skewed to polar residues. Residues Thr-474–Arg-484 are compositionally biased toward basic and acidic residues. Positions Leu-594 to Gly-635 are enriched in acidic residues. A helical transmembrane segment spans residues Leu-701 to Ile-721. The Cytoplasmic segment spans residues Lys-722–Phe-760. Phosphoserine occurs at positions 755 and 756.

Interacts with IL6ST; this interaction prevents IL6ST protein homodimerization and bridges ARMH4 with IL6R and STAT3 and therefore inhibits phosphorylation of STAT3 at 'Tyr-705'. Interacts (via cytoplasmic tail) with RICTOR; this interaction bridges ARMH4 to the mTORC2 complex and inhibits the mTORC2 kinase activity.

Its subcellular location is the membrane. Its function is as follows. May modulate immune response and may play a role in inflammation. Down-modulates STAT3 signaling throught direct interaction with IL6ST, resulting in the inhibition of phosphorylation of STAT3 at Tyr-705. May negatively regulates AKT signaling by modulating the activity of mTORC2 complex through RICTOR interaction. The chain is Armadillo-like helical domain-containing protein 4 from Bos taurus (Bovine).